The sequence spans 389 residues: MVWDFVLSLFHSLLAAFQTLTSWLTGSFLFNNKMAPAPNPAPVTFILPDLEKTFNSLPDDGLNPHHDVACAESREWFAKYNKKVLGAQMQEFFRRCKFELITSYTYPYVDKEGLRATMDWHNILWFFDEVTDTETGKDAHKSAIITIRTLREPDFDDGSSLCRMVRDFRLSHLSRAGPECTRRFLEHCDVAFHAGAVEAELREKGEVLSIEGYLKLRRETSGARTCFDMAEYLMDIDLPQDMYDDPVFQKGYIAALDLIFLANDLYSYNMEQAKGHNGANVLTVVMKETKLNLQSAADYVGVLCEKLIKQFQEAKSTLENRLAKEKNPAKAAALKDAIRSLVGYGHWVRGNVEWSFETERYFGKKNKEIKKSRVVTLTPTNSVNRALKA.

The signal sequence occupies residues 1–15 (MVWDFVLSLFHSLLA). The Mg(2+) site is built by Asp128, Asn263, Ser267, and Glu271. A DDXXD motif motif is present at residues 128 to 132 (DEVTD). Residues Arg360 and Tyr361 each coordinate (2E,6E)-farnesyl diphosphate.

The protein belongs to the terpene synthase family. The cofactor is Mg(2+).

The catalysed reaction is (2E,6E)-farnesyl diphosphate = viridiflorene + diphosphate. Terpene cyclase that catalyzes the cyclization of farnesyl diphosphate (FPP) to viridiflorene. The polypeptide is viridiflorene synthase Agr2 (Cyclocybe aegerita (Black poplar mushroom)).